The chain runs to 528 residues: (R)-citramalate synthase (528 aa).

Positions 4–266 (VKLYDTTLRD…RECIGDDQLR (263 aa)) constitute a Pyruvate carboxyltransferase domain.

The protein belongs to the alpha-IPM synthase/homocitrate synthase family.

It carries out the reaction pyruvate + acetyl-CoA + H2O = (3R)-citramalate + CoA + H(+). It participates in amino-acid biosynthesis; L-isoleucine biosynthesis; 2-oxobutanoate from pyruvate: step 1/3. Functionally, catalyzes the condensation of pyruvate and acetyl-coenzyme A to form (R)-citramalate. Makes part of the main pathway for isoleucine biosynthesis in G.sulfurreducens, i.e. the citramalate-dependent pathway. The protein is (R)-citramalate synthase of Geobacter sulfurreducens (strain ATCC 51573 / DSM 12127 / PCA).